The chain runs to 478 residues: RNA pseudouridine synthase 3, mitochondrial (478 aa).

A mitochondrion-targeting transit peptide spans 1 to 20 (MWKAKTCFRQIYLTVLIRRY). Residues 92 to 162 (EEIYDKAIQT…MRISKRYDTI (71 aa)) form the S4 RNA-binding domain. Asp232 is a catalytic residue.

Belongs to the pseudouridine synthase RluA family.

Its subcellular location is the mitochondrion. It carries out the reaction a uridine in RNA = a pseudouridine in RNA. The sequence is that of RNA pseudouridine synthase 3, mitochondrial from Arabidopsis thaliana (Mouse-ear cress).